Consider the following 227-residue polypeptide: Cytochrome c oxidase subunit 2 (227 aa).

The Mitochondrial intermembrane segment spans residues Met1–Ser14. A helical membrane pass occupies residues Pro15–Met45. Over Leu46–Gln59 the chain is Mitochondrial matrix. The helical transmembrane segment at Glu60–Met87 threads the bilayer. Residues Asp88–Ile227 are Mitochondrial intermembrane-facing. Positions 161, 196, 198, 200, 204, and 207 each coordinate Cu cation. Glu198 is a Mg(2+) binding site. Tyr218 carries the post-translational modification Phosphotyrosine.

Belongs to the cytochrome c oxidase subunit 2 family. In terms of assembly, component of the cytochrome c oxidase (complex IV, CIV), a multisubunit enzyme composed of 14 subunits. The complex is composed of a catalytic core of 3 subunits MT-CO1, MT-CO2 and MT-CO3, encoded in the mitochondrial DNA, and 11 supernumerary subunits COX4I, COX5A, COX5B, COX6A, COX6B, COX6C, COX7A, COX7B, COX7C, COX8 and NDUFA4, which are encoded in the nuclear genome. The complex exists as a monomer or a dimer and forms supercomplexes (SCs) in the inner mitochondrial membrane with NADH-ubiquinone oxidoreductase (complex I, CI) and ubiquinol-cytochrome c oxidoreductase (cytochrome b-c1 complex, complex III, CIII), resulting in different assemblies (supercomplex SCI(1)III(2)IV(1) and megacomplex MCI(2)III(2)IV(2)). Found in a complex with TMEM177, COA6, COX18, COX20, SCO1 and SCO2. Interacts with TMEM177 in a COX20-dependent manner. Interacts with COX20. Interacts with COX16. Cu cation serves as cofactor.

The protein localises to the mitochondrion inner membrane. It carries out the reaction 4 Fe(II)-[cytochrome c] + O2 + 8 H(+)(in) = 4 Fe(III)-[cytochrome c] + 2 H2O + 4 H(+)(out). In terms of biological role, component of the cytochrome c oxidase, the last enzyme in the mitochondrial electron transport chain which drives oxidative phosphorylation. The respiratory chain contains 3 multisubunit complexes succinate dehydrogenase (complex II, CII), ubiquinol-cytochrome c oxidoreductase (cytochrome b-c1 complex, complex III, CIII) and cytochrome c oxidase (complex IV, CIV), that cooperate to transfer electrons derived from NADH and succinate to molecular oxygen, creating an electrochemical gradient over the inner membrane that drives transmembrane transport and the ATP synthase. Cytochrome c oxidase is the component of the respiratory chain that catalyzes the reduction of oxygen to water. Electrons originating from reduced cytochrome c in the intermembrane space (IMS) are transferred via the dinuclear copper A center (CU(A)) of subunit 2 and heme A of subunit 1 to the active site in subunit 1, a binuclear center (BNC) formed by heme A3 and copper B (CU(B)). The BNC reduces molecular oxygen to 2 water molecules using 4 electrons from cytochrome c in the IMS and 4 protons from the mitochondrial matrix. This chain is Cytochrome c oxidase subunit 2 (MT-CO2), found in Rhabdomys pumilio (Four-striped grass mouse).